The chain runs to 186 residues: ATP synthase subunit delta (186 aa).

This sequence belongs to the ATPase delta chain family. As to quaternary structure, F-type ATPases have 2 components, F(1) - the catalytic core - and F(0) - the membrane proton channel. F(1) has five subunits: alpha(3), beta(3), gamma(1), delta(1), epsilon(1). CF(0) has four main subunits: a(1), b(1), b'(1) and c(10-14). The alpha and beta chains form an alternating ring which encloses part of the gamma chain. F(1) is attached to F(0) by a central stalk formed by the gamma and epsilon chains, while a peripheral stalk is formed by the delta, b and b' chains.

Its subcellular location is the cell inner membrane. F(1)F(0) ATP synthase produces ATP from ADP in the presence of a proton or sodium gradient. F-type ATPases consist of two structural domains, F(1) containing the extramembraneous catalytic core and F(0) containing the membrane proton channel, linked together by a central stalk and a peripheral stalk. During catalysis, ATP synthesis in the catalytic domain of F(1) is coupled via a rotary mechanism of the central stalk subunits to proton translocation. Functionally, this protein is part of the stalk that links CF(0) to CF(1). It either transmits conformational changes from CF(0) to CF(1) or is implicated in proton conduction. The protein is ATP synthase subunit delta of Cereibacter sphaeroides (strain ATCC 17029 / ATH 2.4.9) (Rhodobacter sphaeroides).